A 97-amino-acid chain; its full sequence is Sugar transporter SemiSWEET (97 aa).

Residues 4 to 70 enclose the PQ-loop domain; sequence IERIGKALEP…IYGIYHKNPT (67 aa). 3 helical membrane passes run 15 to 35, 44 to 65, and 71 to 91; these read MLVM…KLYV, LSLT…YGIY, and IWVG…GIIA.

As to quaternary structure, homodimer.

The protein resides in the cell membrane. In terms of biological role, the homodimer mediates transmembrane sugar transport down a concentration gradient. Transport is probably effected by rocking-type movements, where a cargo-binding cavity opens first on one and then on the other side of the membrane. The polypeptide is Sugar transporter SemiSWEET (Vibrio sp. (strain N418)).